The chain runs to 227 residues: MSKRSNRSNNKNNTNKFNIENWEPKTELGRKVKDGEITDIDQILDKGLPIMELEIVDALLPDLEEEVMDVNLVQRMHKSGRKVNFRVIVAVGNRNGYVGLGQGKSQEVGPAIRKAVDAAKYNLIKVRRGCGDWGCGCGRRHTVPFKIEGKMSSVSATLIPAPAGVGLAIGNVGKTILSLAGIADVWSMCSGQTQTTINFAGAVFDALKQLSSVKSSEKDLKALGVID.

The segment at 1 to 22 is disordered; the sequence is MSKRSNRSNNKNNTNKFNIENW. The segment covering 7–18 has biased composition (low complexity); sequence RSNNKNNTNKFN. One can recognise an S5 DRBM domain in the interval 63–126; it reads LEEEVMDVNL…DAAKYNLIKV (64 aa).

It belongs to the universal ribosomal protein uS5 family. As to quaternary structure, part of the 30S ribosomal subunit. Contacts protein S4.

In terms of biological role, with S4 and S12 plays an important role in translational accuracy. The polypeptide is Small ribosomal subunit protein uS5 (Methanosphaera stadtmanae (strain ATCC 43021 / DSM 3091 / JCM 11832 / MCB-3)).